The sequence spans 389 residues: Phospho-N-acetylmuramoyl-pentapeptide-transferase (389 aa).

10 helical membrane passes run 25 to 45 (RAVMATVTALLIGLAAGPWVI), 73 to 93 (TMGGVLILIGIFVSCMLWADL), 97 to 117 (FIWIVMIVTFGFGAVGWVDDY), 135 to 155 (FWQTLIGLFAAIYLAFSVSEI), 190 to 210 (VSYPLGMMGFIILSYLVIVGS), 222 to 242 (GLVIMPVILVGAALGAFAYVM), 258 to 278 (GAGELMIFCGAMGGAGLAFLW), 286 to 306 (VFMGDVGALALGGALGTIAVI), 311 to 331 (IVLFVMGGIFVAETVSVMMQV), and 366 to 386 (QVVVRFWIITILLVLIGLSSL).

This sequence belongs to the glycosyltransferase 4 family. MraY subfamily. It depends on Mg(2+) as a cofactor.

It is found in the cell inner membrane. The enzyme catalyses UDP-N-acetyl-alpha-D-muramoyl-L-alanyl-gamma-D-glutamyl-meso-2,6-diaminopimeloyl-D-alanyl-D-alanine + di-trans,octa-cis-undecaprenyl phosphate = di-trans,octa-cis-undecaprenyl diphospho-N-acetyl-alpha-D-muramoyl-L-alanyl-D-glutamyl-meso-2,6-diaminopimeloyl-D-alanyl-D-alanine + UMP. The protein operates within cell wall biogenesis; peptidoglycan biosynthesis. Its function is as follows. Catalyzes the initial step of the lipid cycle reactions in the biosynthesis of the cell wall peptidoglycan: transfers peptidoglycan precursor phospho-MurNAc-pentapeptide from UDP-MurNAc-pentapeptide onto the lipid carrier undecaprenyl phosphate, yielding undecaprenyl-pyrophosphoryl-MurNAc-pentapeptide, known as lipid I. This chain is Phospho-N-acetylmuramoyl-pentapeptide-transferase, found in Polynucleobacter asymbioticus (strain DSM 18221 / CIP 109841 / QLW-P1DMWA-1) (Polynucleobacter necessarius subsp. asymbioticus).